Consider the following 263-residue polypeptide: H-2 class II histocompatibility antigen, A-K beta chain (263 aa).

A signal peptide spans 1-27 (MALQIPSLLLLAAVVVLTVLSSPGTEG). The beta-1 stretch occupies residues 28–120 (GNSERHFVHQ…TETPTSLRRL (93 aa)). At 28-224 (GNSERHFVHQ…RAQSESARSK (197 aa)) the chain is on the extracellular side. 2 disulfide bridges follow: Cys-42-Cys-104 and Cys-143-Cys-199. Asn-46 is a glycosylation site (N-linked (GlcNAc...) asparagine). The interval 121–214 (EQPSVVISLS…SLKSPITVEW (94 aa)) is beta-2. The Ig-like C1-type domain occupies 123-211 (PSVVISLSRT…EHPSLKSPIT (89 aa)). Residues 215–224 (RAQSESARSK) form a connecting peptide region. Residues 225-245 (MLSGIGGCVLGVIFLGLGLFI) traverse the membrane as a helical segment. The Cytoplasmic segment spans residues 246 to 263 (RHRSQKGPRGPPPAGLLQ).

The protein belongs to the MHC class II family. In terms of processing, ubiquitinated in immature dendritic cells leading to down-regulation of MHC class II.

The protein resides in the membrane. The polypeptide is H-2 class II histocompatibility antigen, A-K beta chain (H2-Ab1) (Mus musculus (Mouse)).